A 158-amino-acid chain; its full sequence is Glutathione peroxidase homolog BsaA (158 aa).

T36 is a catalytic residue.

Belongs to the glutathione peroxidase family.

This chain is Glutathione peroxidase homolog BsaA (bsaA), found in Staphylococcus epidermidis (strain ATCC 35984 / DSM 28319 / BCRC 17069 / CCUG 31568 / BM 3577 / RP62A).